Reading from the N-terminus, the 639-residue chain is Wall-associated receptor kinase-like 15 (639 aa).

The first 25 residues, Met-1–Ala-25, serve as a signal peptide directing secretion. Residues Phe-26–Asn-282 are Extracellular-facing. N-linked (GlcNAc...) asparagine glycosylation is found at Asn-68, Asn-115, Asn-126, Asn-141, and Asn-241. The helical transmembrane segment at Leu-283–Thr-303 threads the bilayer. Topologically, residues Lys-304–Ile-639 are cytoplasmic. One can recognise a Protein kinase domain in the interval Phe-354 to Ile-639. ATP contacts are provided by residues Leu-360–Val-368 and Lys-382. Asp-484 acts as the Proton acceptor in catalysis.

Belongs to the protein kinase superfamily. Ser/Thr protein kinase family.

The protein localises to the membrane. The enzyme catalyses L-seryl-[protein] + ATP = O-phospho-L-seryl-[protein] + ADP + H(+). It carries out the reaction L-threonyl-[protein] + ATP = O-phospho-L-threonyl-[protein] + ADP + H(+). Putative serine/threonine-protein kinase that may function as a signaling receptor of extracellular matrix component. The chain is Wall-associated receptor kinase-like 15 (WAKL15) from Arabidopsis thaliana (Mouse-ear cress).